The primary structure comprises 457 residues: Bifunctional protein GlmU (457 aa).

The interval 1–228 is pyrophosphorylase; the sequence is MEGLVTLILA…SEEITGVNSR (228 aa). UDP-N-acetyl-alpha-D-glucosamine contacts are provided by residues 9 to 12, Lys23, Gln73, and 78 to 79; these read LAAG and GT. Asp102 serves as a coordination point for Mg(2+). 4 residues coordinate UDP-N-acetyl-alpha-D-glucosamine: Gly139, Glu154, Asn169, and Asn226. Asn226 contacts Mg(2+). Residues 229 to 249 are linker; it reads VQLFEAEKIMRKRINYRHMEN. An N-acetyltransferase region spans residues 250 to 457; the sequence is GVTIVDPDTT…VQERIKKGRL (208 aa). Positions 331 and 349 each coordinate UDP-N-acetyl-alpha-D-glucosamine. Catalysis depends on His361, which acts as the Proton acceptor. Positions 364 and 375 each coordinate UDP-N-acetyl-alpha-D-glucosamine. Acetyl-CoA is bound by residues 384-385, Ala421, and Arg438; that span reads NY.

The protein in the N-terminal section; belongs to the N-acetylglucosamine-1-phosphate uridyltransferase family. In the C-terminal section; belongs to the transferase hexapeptide repeat family. Homotrimer. Requires Mg(2+) as cofactor.

It localises to the cytoplasm. The enzyme catalyses alpha-D-glucosamine 1-phosphate + acetyl-CoA = N-acetyl-alpha-D-glucosamine 1-phosphate + CoA + H(+). It carries out the reaction N-acetyl-alpha-D-glucosamine 1-phosphate + UTP + H(+) = UDP-N-acetyl-alpha-D-glucosamine + diphosphate. Its pathway is nucleotide-sugar biosynthesis; UDP-N-acetyl-alpha-D-glucosamine biosynthesis; N-acetyl-alpha-D-glucosamine 1-phosphate from alpha-D-glucosamine 6-phosphate (route II): step 2/2. The protein operates within nucleotide-sugar biosynthesis; UDP-N-acetyl-alpha-D-glucosamine biosynthesis; UDP-N-acetyl-alpha-D-glucosamine from N-acetyl-alpha-D-glucosamine 1-phosphate: step 1/1. It participates in bacterial outer membrane biogenesis; LPS lipid A biosynthesis. Functionally, catalyzes the last two sequential reactions in the de novo biosynthetic pathway for UDP-N-acetylglucosamine (UDP-GlcNAc). The C-terminal domain catalyzes the transfer of acetyl group from acetyl coenzyme A to glucosamine-1-phosphate (GlcN-1-P) to produce N-acetylglucosamine-1-phosphate (GlcNAc-1-P), which is converted into UDP-GlcNAc by the transfer of uridine 5-monophosphate (from uridine 5-triphosphate), a reaction catalyzed by the N-terminal domain. The sequence is that of Bifunctional protein GlmU from Thermoanaerobacter pseudethanolicus (strain ATCC 33223 / 39E) (Clostridium thermohydrosulfuricum).